A 1543-amino-acid chain; its full sequence is ABC multidrug transporter AFR1 (1543 aa).

Residues 1–85 form a disordered region; the sequence is MSAAGVPAEL…DGKQKRLPAD (85 aa). A compositionally biased stretch (polar residues) spans 18-41; sequence TATTQNPSGLANSQVTSGPVSSAT. Residues 62–83 show a composition bias toward basic and acidic residues; it reads AVEAEKAEAIDAAGDGKQKRLP. Residue Asn117 is glycosylated (N-linked (GlcNAc...) asparagine). Residues 119-157 form a disordered region; the sequence is SQRSQHELHRPTTRHSVRSSFSRKDRVVSRLTQDDAEKA. Residues 140–157 show a composition bias toward basic and acidic residues; it reads SRKDRVVSRLTQDDAEKA. 2 N-linked (GlcNAc...) asparagine glycosylation sites follow: Asn208 and Asn398. The region spanning 222 to 474 is the ABC transporter 1 domain; it reads IKVLGIFGFN…MIGLGYRDLP (253 aa). 5 helical membrane passes run 585 to 605, 619 to 639, 670 to 690, 695 to 715, and 727 to 747; these read FGIS…GSVY, GGLL…ELPS, VPYN…MGGL, GAFF…SAFF, and VAAR…GYMI. The N-linked (GlcNAc...) asparagine glycan is linked to Asn823. Residues 845 to 865 form a helical membrane-spanning segment; that stretch reads FGILLGFFTFFMFLQMLFIEV. In terms of domain architecture, ABC transporter 2 spans 918–1160; it reads FTWEGLSYTV…VLIDYLERNG (243 aa). 954–961 lines the ATP pocket; the sequence is GASGAGKT. The N-linked (GlcNAc...) asparagine glycan is linked to Asn1223. The next 6 membrane-spanning stretches (helical) occupy residues 1254 to 1274, 1285 to 1305, 1336 to 1356, 1366 to 1386, 1391 to 1411, and 1517 to 1537; these read WTRL…FLQL, VFAI…IEPQ, MPYS…GVGF, FFLM…AVAA, ILIA…FCGV, and FGIF…AARF.

It belongs to the ABC transporter superfamily. ABCG family. PDR (TC 3.A.1.205) subfamily.

It is found in the cell membrane. The catalysed reaction is itraconazole(in) + ATP + H2O = itraconazole(out) + ADP + phosphate + H(+). The enzyme catalyses voriconazole(in) + ATP + H2O = voriconazole(out) + ADP + phosphate + H(+). It catalyses the reaction fluconazole(in) + ATP + H2O = fluconazole(out) + ADP + phosphate + H(+). Its function is as follows. Major pleiotropic ABC efflux transporter that confers resistance to structurally and functionally unrelated compounds including azoles such as fluconazole (FLC), itraconazole (ITC), posaconazole (POS), and voriconazole (VRC). Is also able to efflux the eukaryote protein synthesis inhibitor cycloheximide (CHX). In Cryptococcus neoformans var. grubii serotype A (strain H99 / ATCC 208821 / CBS 10515 / FGSC 9487) (Filobasidiella neoformans var. grubii), this protein is ABC multidrug transporter AFR1.